The primary structure comprises 261 residues: Transmembrane protein 187 (261 aa).

6 consecutive transmembrane segments (helical) span residues 8 to 28 (AFVHVAVAGGLCAVAVFTGIF), 43 to 63 (APVAGLPAFLAMPFNSLVNMA), 88 to 108 (VFAAMALLYGPVQWLRLWTQW), 113 to 133 (VLDQWLTLPIFAWPVAWCLYL), 140 to 162 (WLFLSLECVSLASYGLALLHPQG), and 190 to 210 (SATYLALGVLSCLGFVVLKLC).

In terms of tissue distribution, ubiquitous.

It is found in the membrane. The sequence is that of Transmembrane protein 187 (TMEM187) from Homo sapiens (Human).